The following is a 261-amino-acid chain: Tryptophan synthase alpha chain (261 aa).

Active-site proton acceptor residues include Glu47 and Asp58.

This sequence belongs to the TrpA family. Tetramer of two alpha and two beta chains.

It carries out the reaction (1S,2R)-1-C-(indol-3-yl)glycerol 3-phosphate + L-serine = D-glyceraldehyde 3-phosphate + L-tryptophan + H2O. The protein operates within amino-acid biosynthesis; L-tryptophan biosynthesis; L-tryptophan from chorismate: step 5/5. The alpha subunit is responsible for the aldol cleavage of indoleglycerol phosphate to indole and glyceraldehyde 3-phosphate. This chain is Tryptophan synthase alpha chain, found in Neisseria gonorrhoeae (strain ATCC 700825 / FA 1090).